Reading from the N-terminus, the 189-residue chain is Alanine and glycine-rich protein (189 aa).

Residues 127 to 160 (AGAGGGSGGGGGGGSGSGGSGGSGGSGGSGGNDG) show a composition bias toward gly residues. Residues 127-170 (AGAGGGSGGGGGGGSGSGGSGGSGGSGGSGGNDGNDGNDGSSSR) are disordered.

As to expression, component of the organic matrix of calcified shell layers like nacre and prisms.

The protein localises to the secreted. This is Alanine and glycine-rich protein from Mytilus californianus (California mussel).